Consider the following 395-residue polypeptide: Hdr-like menaquinol oxidoreductase integral membrane subunit (395 aa).

The next 10 helical transmembrane spans lie at 15-35 (YFALVIILAAVTALGFYAYVL), 57-77 (IPYFIGLSAGSLIVSALAGVF), 88-108 (IAAYMAAAWIIAAILSIALDI), 126-146 (IFSWNAFLYSSYFVICSIYLL), 158-178 (FMAGLAVFWAVLVHSGTGAIY), 196-216 (FIVCAITSGLGLLLANLYFTF), 231-251 (LALIFAGLMMVLGYFLAVEGL), 274-294 (VFWSFWLLVIFGIAIPIIIVL), 305-325 (ITFAGILHAALVFAERFYLII), and 364-384 (IGLIAMVYLIFVVGVKLFALI).

This sequence belongs to the NrfD family. In terms of assembly, consists of five subunits: an integral membrane subunit, a cytochrome b-like subunit, a cytochrome c subunit and two iron-sulfur subunits.

It is found in the cell membrane. Its function is as follows. Has menaquinol-oxidizing activity. HmeB subunit may function as a menaquinol-oxidizing site. HmeA, HmeB and HmeE subunits may together catalyze electron transfer from menaquinol to cytochrome c. The protein is Hdr-like menaquinol oxidoreductase integral membrane subunit (hmeB) of Archaeoglobus fulgidus (strain ATCC 49558 / DSM 4304 / JCM 9628 / NBRC 100126 / VC-16).